A 488-amino-acid chain; its full sequence is Dipeptide and tripeptide permease A (488 aa).

At 1–35 the chain is on the cytoplasmic side; it reads MSTANTPEDEQKPSLNAFKQPRAFYLIFSIELWER. The helical transmembrane segment at 36–56 threads the bilayer; sequence FGYYGLQGIMAVYLVKMLGMS. Topologically, residues 57–60 are periplasmic; sequence EAEA. A helical transmembrane segment spans residues 61–81; that stretch reads ITVFAAFTALVYGFVAIGGWL. Topologically, residues 82-90 are cytoplasmic; that stretch reads GDKILGTKR. A helical membrane pass occupies residues 91–111; that stretch reads VIVLGAIVLAIGYAMVAFSDH. The Periplasmic segment spans residues 112–114; that stretch reads DKD. A helical transmembrane segment spans residues 115-135; that stretch reads MIYWGLATIAVGNGLFKANPS. Residues 136–154 are Cytoplasmic-facing; sequence SLLATCYEKDDPQLDGAFT. A helical transmembrane segment spans residues 155-175; that stretch reads MYYMSINVGSFLSMLATPWLA. Topologically, residues 176–179 are periplasmic; that stretch reads ANYG. Residues 180 to 200 form a helical membrane-spanning segment; it reads WDVAFALSVVGMLITLANFML. Over 201-219 the chain is Cytoplasmic; it reads CRGWIKDKGSRPDFEPLNY. The helical transmembrane segment at 220–240 threads the bilayer; that stretch reads LKLLLTLVGIVALTAVSTWLL. A topological domain (periplasmic) is located at residue histidine 241. Residues 242–262 traverse the membrane as a helical segment; sequence NNEVATWSLAIISLGIILIFA. Over 263–275 the chain is Cytoplasmic; the sequence is RETFMMKGVARRK. The chain crosses the membrane as a helical span at residues 276-296; it reads MIVAFLLMVEAVVFFVLYDQM. The Periplasmic segment spans residues 297–324; the sequence is PTSLNFFAIHNVEHAILGFSVEPEQFQS. The chain crosses the membrane as a helical span at residues 325-345; sequence LNPFWIMLASPLLAAIYNFMG. Residues 346 to 353 are Cytoplasmic-facing; the sequence is DKLPMPYK. Residues 354-374 form a helical membrane-spanning segment; that stretch reads FTVGMFLSATAFLVLPLGASM. Over 375–391 the chain is Periplasmic; the sequence is ANEAGIVSSWWLVASYG. The helical transmembrane segment at 392–412 threads the bilayer; that stretch reads FQSIGELMISGLGLAMVAQLV. Residues 413-415 lie on the Cytoplasmic side of the membrane; it reads PQR. A helical membrane pass occupies residues 416–436; that stretch reads LMGFIMGAWFLTSAAAAIIAG. Topologically, residues 437-460 are periplasmic; the sequence is KVASLMAVPEDVQNAHASLEIYSS. The helical transmembrane segment at 461–481 threads the bilayer; sequence VFLQIGIVTGVIALLMLFTAP. Residues 482–488 are Cytoplasmic-facing; it reads MLSKMTQ.

It belongs to the major facilitator superfamily. Proton-dependent oligopeptide transporter (POT/PTR) (TC 2.A.17) family. DtpA subfamily.

The protein resides in the cell inner membrane. Proton-dependent permease that transports di- and tripeptides. This Proteus mirabilis (strain HI4320) protein is Dipeptide and tripeptide permease A.